We begin with the raw amino-acid sequence, 332 residues long: 2,3-diketo-L-gulonate reductase (332 aa).

Histidine 44 functions as the Proton donor in the catalytic mechanism. Residues 168 to 174 (ITMVDMS), 224 to 225 (WK), and 304 to 306 (GHE) each bind NAD(+).

Belongs to the LDH2/MDH2 oxidoreductase family. DlgD subfamily. Homodimer.

It is found in the cytoplasm. It catalyses the reaction 3-dehydro-L-gulonate + NAD(+) = 2,3-dioxo-L-gulonate + NADH + H(+). It carries out the reaction 3-dehydro-L-gulonate + NADP(+) = 2,3-dioxo-L-gulonate + NADPH + H(+). Its function is as follows. Catalyzes the reduction of 2,3-diketo-L-gulonate in the presence of NADH, to form 3-keto-L-gulonate. The polypeptide is 2,3-diketo-L-gulonate reductase (Salmonella paratyphi B (strain ATCC BAA-1250 / SPB7)).